We begin with the raw amino-acid sequence, 447 residues long: Argininosuccinate synthase (447 aa).

Residues 17–25 (AFSGGLDTS) and Ala-43 each bind ATP. Residue Tyr-99 coordinates L-citrulline. ATP-binding residues include Gly-129 and Thr-131. The L-aspartate site is built by Thr-131, Asn-135, and Asp-136. Asn-135 is a binding site for L-citrulline. Asp-136 is a binding site for ATP. 2 residues coordinate L-citrulline: Arg-139 and Ser-192. ATP is bound at residue Asp-194. Thr-201, Glu-203, and Glu-280 together coordinate L-citrulline.

This sequence belongs to the argininosuccinate synthase family. Type 2 subfamily. Homotetramer.

The protein localises to the cytoplasm. It carries out the reaction L-citrulline + L-aspartate + ATP = 2-(N(omega)-L-arginino)succinate + AMP + diphosphate + H(+). It functions in the pathway amino-acid biosynthesis; L-arginine biosynthesis; L-arginine from L-ornithine and carbamoyl phosphate: step 2/3. This is Argininosuccinate synthase from Janthinobacterium sp. (strain Marseille) (Minibacterium massiliensis).